Here is a 300-residue protein sequence, read N- to C-terminus: MKELIQRSRKSFTVVQSVEADVPDNVWIKCPSCRELIYHKQLAERMKVCRCGYHMRLKAREWLALLDEDSFVEHDAHLRPADPLGFVSPKETYADKLREAQRRTGLADVVVSGVGSIEGRRLAVAVCDFEFIGGSMGSVFGEKMARAAERAAALGIPLLTINTSGGARMQEGVIALMQLAKVNMALTRLAAARQPHIAVLVDPCYGGVTASYASVADIIIAEPGASIGFAGRRVIEQTIRQKLPADFQTAEFMLQHGMVDMVVPRSELHSTLAKLLRLYAAEGRATAHKSEPIVTALASL.

In terms of domain architecture, CoA carboxyltransferase N-terminal spans 26 to 294; sequence VWIKCPSCRE…ATAHKSEPIV (269 aa). The Zn(2+) site is built by C30, C33, C49, and C51. The C4-type zinc finger occupies 30–51; sequence CPSCRELIYHKQLAERMKVCRC.

This sequence belongs to the AccD/PCCB family. Acetyl-CoA carboxylase is a heterohexamer composed of biotin carboxyl carrier protein (AccB), biotin carboxylase (AccC) and two subunits each of ACCase subunit alpha (AccA) and ACCase subunit beta (AccD). Zn(2+) serves as cofactor.

The protein localises to the cytoplasm. It catalyses the reaction N(6)-carboxybiotinyl-L-lysyl-[protein] + acetyl-CoA = N(6)-biotinyl-L-lysyl-[protein] + malonyl-CoA. The protein operates within lipid metabolism; malonyl-CoA biosynthesis; malonyl-CoA from acetyl-CoA: step 1/1. In terms of biological role, component of the acetyl coenzyme A carboxylase (ACC) complex. Biotin carboxylase (BC) catalyzes the carboxylation of biotin on its carrier protein (BCCP) and then the CO(2) group is transferred by the transcarboxylase to acetyl-CoA to form malonyl-CoA. The chain is Acetyl-coenzyme A carboxylase carboxyl transferase subunit beta 2 from Roseiflexus sp. (strain RS-1).